A 314-amino-acid chain; its full sequence is MRIVFMGTGDIAIPAFRSLIRHSDLAGLVTQPDRPVGRHQVLTAPAIKNIAREAGIPVLQPHSLRSPDALSNLRRLNPDLIVVMAYGQILSQEVIDMAPMGCINAHASLLPRHRGAACIQSAIKSGDAETGITIMHIVRKLDAGDIIAQISTPLEGSETGGTLHDKLARMTPDVLLPVIHSIEKGTATRIRQQEILATYAPKLLRADGKIDWTRPAEEIGRMIRAYDPWPGTFTNYWNRKKRIRNMKIFPGFSILPEAEGKPGQVLSAGEQGLLIACGSGGLLVTDVQLEGSTRMNISQLIAGHPNLKDIHFDV.

108–111 (SLLP) is a binding site for (6S)-5,6,7,8-tetrahydrofolate.

This sequence belongs to the Fmt family.

It catalyses the reaction L-methionyl-tRNA(fMet) + (6R)-10-formyltetrahydrofolate = N-formyl-L-methionyl-tRNA(fMet) + (6S)-5,6,7,8-tetrahydrofolate + H(+). In terms of biological role, attaches a formyl group to the free amino group of methionyl-tRNA(fMet). The formyl group appears to play a dual role in the initiator identity of N-formylmethionyl-tRNA by promoting its recognition by IF2 and preventing the misappropriation of this tRNA by the elongation apparatus. The chain is Methionyl-tRNA formyltransferase from Akkermansia muciniphila (strain ATCC BAA-835 / DSM 22959 / JCM 33894 / BCRC 81048 / CCUG 64013 / CIP 107961 / Muc).